A 344-amino-acid chain; its full sequence is uncharacterized protein (344 aa).

Residues 242 to 343 (RGITALVRSK…GVAPSEYSRR (102 aa)) form the HTH araC/xylS-type domain. 2 consecutive DNA-binding regions (H-T-H motif) follow at residues 263-284 (TDVA…AEEG) and 310-333 (VQQV…KRWY).

This is an uncharacterized protein from Mycobacterium bovis (strain ATCC BAA-935 / AF2122/97).